Consider the following 143-residue polypeptide: Nucleoside diphosphate kinase (143 aa).

Residues Lys-11, Phe-59, Arg-87, Thr-93, Arg-104, and Asn-114 each coordinate ATP. His-117 functions as the Pros-phosphohistidine intermediate in the catalytic mechanism.

It belongs to the NDK family. Homotetramer. The cofactor is Mg(2+).

It is found in the cytoplasm. The catalysed reaction is a 2'-deoxyribonucleoside 5'-diphosphate + ATP = a 2'-deoxyribonucleoside 5'-triphosphate + ADP. It catalyses the reaction a ribonucleoside 5'-diphosphate + ATP = a ribonucleoside 5'-triphosphate + ADP. In terms of biological role, major role in the synthesis of nucleoside triphosphates other than ATP. The ATP gamma phosphate is transferred to the NDP beta phosphate via a ping-pong mechanism, using a phosphorylated active-site intermediate. This is Nucleoside diphosphate kinase from Idiomarina loihiensis (strain ATCC BAA-735 / DSM 15497 / L2-TR).